A 352-amino-acid polypeptide reads, in one-letter code: Protein pelota homolog (352 aa).

The protein belongs to the eukaryotic release factor 1 family. Pelota subfamily. In terms of assembly, monomer. It depends on a divalent metal cation as a cofactor.

The protein resides in the cytoplasm. Functionally, may function in recognizing stalled ribosomes, interact with stem-loop structures in stalled mRNA molecules, and effect endonucleolytic cleavage of the mRNA. May play a role in the release non-functional ribosomes and degradation of damaged mRNAs. Has endoribonuclease activity. This Thermofilum pendens (strain DSM 2475 / Hrk 5) protein is Protein pelota homolog.